A 121-amino-acid chain; its full sequence is Large ribosomal subunit protein bL20 (121 aa).

It belongs to the bacterial ribosomal protein bL20 family.

Functionally, binds directly to 23S ribosomal RNA and is necessary for the in vitro assembly process of the 50S ribosomal subunit. It is not involved in the protein synthesizing functions of that subunit. This is Large ribosomal subunit protein bL20 from Beijerinckia indica subsp. indica (strain ATCC 9039 / DSM 1715 / NCIMB 8712).